The following is a 156-amino-acid chain: Ribosomal RNA large subunit methyltransferase H (156 aa).

S-adenosyl-L-methionine contacts are provided by residues Leu73, Gly104, and 123–128; that span reads LSSLTL.

Belongs to the RNA methyltransferase RlmH family. In terms of assembly, homodimer.

Its subcellular location is the cytoplasm. The enzyme catalyses pseudouridine(1915) in 23S rRNA + S-adenosyl-L-methionine = N(3)-methylpseudouridine(1915) in 23S rRNA + S-adenosyl-L-homocysteine + H(+). Specifically methylates the pseudouridine at position 1915 (m3Psi1915) in 23S rRNA. The protein is Ribosomal RNA large subunit methyltransferase H of Neisseria meningitidis serogroup C / serotype 2a (strain ATCC 700532 / DSM 15464 / FAM18).